The chain runs to 148 residues: Cystatin-D (148 aa).

The signal sequence occupies residues 1-33; sequence MASLLSPSMPVLAAVALTLTLAVIPEASTNAEA. The 113-residue stretch at 36 to 148 folds into the Cystatin kininogen-type domain; it reads VVLGGVEPAD…SMTNFNCYNF (113 aa). Intrachain disulfides connect Cys101/Cys111 and Cys125/Cys145.

This sequence belongs to the cystatin family. In cartilage, expressed mainly in mature chondrocytes including prehypertrophic and hypertrophic cells (at protein level). Expressed exclusively in cartilage.

It is found in the cytoplasm. It localises to the cytosol. Functionally, may play a role in the last steps of the chondrocyte differentiation pathway as an inducer of maturation. Induces chondrocyte calcification during endochondral ossification by playing a role in the transcriptional inhibition of ENPP1, a generator of pyrophosphate which inhibits calcification. Possibly impairs the binding of a transcription factor to the ENPP1 promoter. Unlike other cystatins, does not have thiol protease inhibitor activity. The chain is Cystatin-D from Mus musculus (Mouse).